The following is an 86-amino-acid chain: Omega-theraphotoxin-Hhn1d (86 aa).

The signal sequence occupies residues 1–21 (MKSIVFVALFGLALLAVVCSA). The propeptide occupies 22 to 50 (SEDAHKELLKEVVRAMVVDKTDAVQAEER). 3 disulfide bridges follow: Cys52–Cys66, Cys59–Cys71, and Cys65–Cys78.

This sequence belongs to the neurotoxin 10 (Hwtx-1) family. 17 (Hntx-9) subfamily. Expressed by the venom gland.

Its subcellular location is the secreted. Ion channel inhibitor. The protein is Omega-theraphotoxin-Hhn1d of Cyriopagopus hainanus (Chinese bird spider).